Here is a 471-residue protein sequence, read N- to C-terminus: Plasmepsin VII (471 aa).

The first 24 residues, Met-1–Ser-24, serve as a signal peptide directing secretion. The region spanning Tyr-96–Val-438 is the Peptidase A1 domain. Residues Asp-115 and Asp-325 contribute to the active site.

Belongs to the peptidase A1 family.

It localises to the cytoplasm. The sequence is that of Plasmepsin VII from Plasmodium berghei (strain Anka).